The sequence spans 218 residues: Probable nicotinate-nucleotide adenylyltransferase (218 aa).

This sequence belongs to the NadD family.

The catalysed reaction is nicotinate beta-D-ribonucleotide + ATP + H(+) = deamido-NAD(+) + diphosphate. It functions in the pathway cofactor biosynthesis; NAD(+) biosynthesis; deamido-NAD(+) from nicotinate D-ribonucleotide: step 1/1. Its function is as follows. Catalyzes the reversible adenylation of nicotinate mononucleotide (NaMN) to nicotinic acid adenine dinucleotide (NaAD). The protein is Probable nicotinate-nucleotide adenylyltransferase of Corynebacterium glutamicum (strain ATCC 13032 / DSM 20300 / JCM 1318 / BCRC 11384 / CCUG 27702 / LMG 3730 / NBRC 12168 / NCIMB 10025 / NRRL B-2784 / 534).